Reading from the N-terminus, the 587-residue chain is Bifunctional lycopene cyclase/phytoene synthase (587 aa).

A lycopene beta-cyclase region spans residues 1–242 (MGYDYALVHV…IVFGIAAFDK (242 aa)). Helical transmembrane passes span 8–28 (VHVK…YPVF), 35–55 (RTLF…SYLI), 77–97 (AEEL…YIIL), 120–140 (GKLV…WLIA), 150–170 (LILV…AHFL), 172–192 (ALPL…LWIV), and 220–240 (IEEA…IAAF). A phytoene synthase region spans residues 249-587 (AFPEKFDKPA…WVAWSTLMAA (339 aa)).

This sequence in the N-terminal section; belongs to the lycopene beta-cyclase family. It in the C-terminal section; belongs to the phytoene/squalene synthase family.

The protein resides in the membrane. The catalysed reaction is all-trans-lycopene = gamma-carotene. It catalyses the reaction gamma-carotene = all-trans-beta-carotene. The enzyme catalyses 2 (2E,6E,10E)-geranylgeranyl diphosphate = 15-cis-phytoene + 2 diphosphate. It participates in carotenoid biosynthesis; beta-carotene biosynthesis. Its pathway is carotenoid biosynthesis; phytoene biosynthesis; all-trans-phytoene from geranylgeranyl diphosphate: step 1/1. In terms of biological role, bifunctional enzyme that catalyzes the reactions from geranylgeranyl diphosphate to phytoene (phytoene synthase) and lycopene to beta-carotene via the intermediate gamma-carotene (lycopene cyclase). This is Bifunctional lycopene cyclase/phytoene synthase from Colletotrichum graminicola (strain M1.001 / M2 / FGSC 10212) (Maize anthracnose fungus).